We begin with the raw amino-acid sequence, 321 residues long: Ribose-phosphate pyrophosphokinase 2 (321 aa).

Positions 130, 132, and 145 each coordinate Mg(2+). Residue serine 172 is modified to Phosphoserine.

This sequence belongs to the ribose-phosphate pyrophosphokinase family.

It is found in the cytoplasm. The catalysed reaction is D-ribose 5-phosphate + ATP = 5-phospho-alpha-D-ribose 1-diphosphate + AMP + H(+). It participates in metabolic intermediate biosynthesis; 5-phospho-alpha-D-ribose 1-diphosphate biosynthesis; 5-phospho-alpha-D-ribose 1-diphosphate from D-ribose 5-phosphate (route I): step 1/1. 5-phosphoribose 1-diphosphate synthase involved in nucleotide, histidine, and tryptophan biosynthesis. Active in heteromultimeric complexes with other 5-phosphoribose 1-diphosphate synthases. This is Ribose-phosphate pyrophosphokinase 2 from Schizosaccharomyces pombe (strain 972 / ATCC 24843) (Fission yeast).